Here is a 299-residue protein sequence, read N- to C-terminus: tRNA dimethylallyltransferase (299 aa).

13-20 is a binding site for ATP; the sequence is GPTASGKT. 15 to 20 serves as a coordination point for substrate; the sequence is TASGKT. The tract at residues 38 to 41 is interaction with substrate tRNA; sequence DSRQ.

It belongs to the IPP transferase family. As to quaternary structure, monomer. Requires Mg(2+) as cofactor.

The catalysed reaction is adenosine(37) in tRNA + dimethylallyl diphosphate = N(6)-dimethylallyladenosine(37) in tRNA + diphosphate. Catalyzes the transfer of a dimethylallyl group onto the adenine at position 37 in tRNAs that read codons beginning with uridine, leading to the formation of N6-(dimethylallyl)adenosine (i(6)A). In Prochlorococcus marinus subsp. pastoris (strain CCMP1986 / NIES-2087 / MED4), this protein is tRNA dimethylallyltransferase.